The chain runs to 159 residues: Cyclic pyranopterin monophosphate synthase (159 aa).

Residues 75–77 (MCH) and 113–114 (ME) contribute to the substrate site. The active site involves D128.

This sequence belongs to the MoaC family. As to quaternary structure, homohexamer; trimer of dimers.

The enzyme catalyses (8S)-3',8-cyclo-7,8-dihydroguanosine 5'-triphosphate = cyclic pyranopterin phosphate + diphosphate. The protein operates within cofactor biosynthesis; molybdopterin biosynthesis. In terms of biological role, catalyzes the conversion of (8S)-3',8-cyclo-7,8-dihydroguanosine 5'-triphosphate to cyclic pyranopterin monophosphate (cPMP). The polypeptide is Cyclic pyranopterin monophosphate synthase (Desulfatibacillum aliphaticivorans).